Here is a 109-residue protein sequence, read N- to C-terminus: uncharacterized protein (109 aa).

This sequence to A.fulgidus AF1885.

This is an uncharacterized protein from Methanocaldococcus jannaschii (strain ATCC 43067 / DSM 2661 / JAL-1 / JCM 10045 / NBRC 100440) (Methanococcus jannaschii).